We begin with the raw amino-acid sequence, 209 residues long: Orotate phosphoribosyltransferase (209 aa).

Residues Arg-96, Lys-100, His-102, and 122–130 (EDLISTGGS) each bind 5-phospho-alpha-D-ribose 1-diphosphate. Residue Ser-126 participates in orotate binding.

This sequence belongs to the purine/pyrimidine phosphoribosyltransferase family. PyrE subfamily. In terms of assembly, homodimer. The cofactor is Mg(2+).

The catalysed reaction is orotidine 5'-phosphate + diphosphate = orotate + 5-phospho-alpha-D-ribose 1-diphosphate. It participates in pyrimidine metabolism; UMP biosynthesis via de novo pathway; UMP from orotate: step 1/2. Catalyzes the transfer of a ribosyl phosphate group from 5-phosphoribose 1-diphosphate to orotate, leading to the formation of orotidine monophosphate (OMP). The chain is Orotate phosphoribosyltransferase from Listeria innocua serovar 6a (strain ATCC BAA-680 / CLIP 11262).